Reading from the N-terminus, the 397-residue chain is Na(+)/H(+) antiporter NhaA 3 (397 aa).

Helical transmembrane passes span 18 to 38 (AGGI…NSPF), 63 to 83 (LLLW…GLEL), 98 to 118 (IALP…IYWW), 129 to 149 (GWAI…ALLG), 158 to 178 (IFLT…IAFF), 181 to 201 (SKIS…LFIC), 207 to 224 (TTLR…VALL), 269 to 289 (VAFL…FIGM), 306 to 326 (LFFG…LFGW), 340 to 360 (GVAV…SLAF), and 373 to 393 (LGIV…LRSA).

The protein belongs to the NhaA Na(+)/H(+) (TC 2.A.33) antiporter family.

The protein localises to the cell inner membrane. The catalysed reaction is Na(+)(in) + 2 H(+)(out) = Na(+)(out) + 2 H(+)(in). Its function is as follows. Na(+)/H(+) antiporter that extrudes sodium in exchange for external protons. This chain is Na(+)/H(+) antiporter NhaA 3, found in Saccharophagus degradans (strain 2-40 / ATCC 43961 / DSM 17024).